The sequence spans 219 residues: Probable nicotinate-nucleotide adenylyltransferase (219 aa).

Belongs to the NadD family.

The enzyme catalyses nicotinate beta-D-ribonucleotide + ATP + H(+) = deamido-NAD(+) + diphosphate. It participates in cofactor biosynthesis; NAD(+) biosynthesis; deamido-NAD(+) from nicotinate D-ribonucleotide: step 1/1. In terms of biological role, catalyzes the reversible adenylation of nicotinate mononucleotide (NaMN) to nicotinic acid adenine dinucleotide (NaAD). The chain is Probable nicotinate-nucleotide adenylyltransferase from Pseudoalteromonas atlantica (strain T6c / ATCC BAA-1087).